The primary structure comprises 247 residues: Ribosomal RNA processing protein 36 homolog (247 aa).

Disordered regions lie at residues 1–29 (MDNQLSDSSDDESPTDDCSDEGEVEHLKD), 62–89 (RTQGIPDLETKKKKNKGPQELSSKQRVP), 136–188 (SVEK…RELV), and 218–247 (GKLQKYLTKRRKKTASKDRRHVPERRQVDQ). Positions 8-23 (SSDDESPTDDCSDEGE) are enriched in acidic residues. Composition is skewed to basic and acidic residues over residues 136–153 (SVEKELKKTKNAEKRKNL) and 164–174 (ERSRKSAEAKR). The segment covering 218–240 (GKLQKYLTKRRKKTASKDRRHVP) has biased composition (basic residues).

The protein belongs to the RRP36 family.

The protein localises to the nucleus. The protein resides in the nucleolus. In terms of biological role, involved in the early processing steps of the pre-rRNA in the maturation pathway leading to the 18S rRNA. In Nematostella vectensis (Starlet sea anemone), this protein is Ribosomal RNA processing protein 36 homolog.